Reading from the N-terminus, the 70-residue chain is U2-agatoxin-Ao1a (70 aa).

The first 20 residues, 1–20, serve as a signal peptide directing secretion; the sequence is MRAIISLFLISAMVFSMIQA. The propeptide occupies 21–34; the sequence is VPEEEGLQLSEDER. 3 disulfide bridges follow: Cys37–Cys53, Cys44–Cys58, and Cys52–Cys68. Residue Leu69 is modified to Leucine amide.

The protein belongs to the neurotoxin 01 (U2-agtx) family. As to expression, expressed by the venom gland.

It localises to the secreted. In terms of biological role, insect active toxin causing rapid but reversible paralysis in crickets. No activity shown in mammals. Suppresses the excitatory postsynaptic potentials evoked in lobster neuromuscular synaptic preparations, possibly by blocking the presynaptic calcium channel. Induces instantaneous reversible paralysis when injected into crickets. Does not show effect on mammalian Cav2.1/CACNA1A, Cav2.2/CACNA1B and Cav2.3/CACNA1E. In Agelena orientalis (Funnel-web spider), this protein is U2-agatoxin-Ao1a.